Reading from the N-terminus, the 443-residue chain is FLYWCH-type zinc finger-containing protein peb-1 (443 aa).

A disordered region spans residues 22–49 (KPGSSDISSSSTDTSAISPISVSSMPLS). Residues 25-42 (SSDISSSSTDTSAISPIS) show a composition bias toward low complexity. The segment at residues 46–203 (MPLSPDKEKK…RNKDGKPKKP (158 aa)) is a DNA-binding region (required for DNA-binding). The FLYWCH-type zinc-finger motif lies at 69 to 135 (IVTSFKGYQK…NACTKGSHNH (67 aa)). A disordered region spans residues 251–271 (PTIQIPQPIPTPIQHQQQEQS).

The protein resides in the nucleus. In terms of biological role, putative transcription factor. Binds to specific sequence motif 5'-[TC][AGT]TGCC[GA][AT]-3' in regulatory elements of target genes such as myosin myo-2. May modulate gene expression, perhaps acting in opposition to transcription factor pha-4. Involved in morphogenesis, perhaps especially in formation of the pharynx. Plays roles in molting, feeding and morphology. The sequence is that of FLYWCH-type zinc finger-containing protein peb-1 from Caenorhabditis elegans.